The primary structure comprises 62 residues: Bacteriocin lactacin-F subunit LafX (62 aa).

A propeptide spanning residues 1-14 (MKLNDKELSKIVGG) is cleaved from the precursor.

This sequence belongs to the bacteriocin class IIB family. As to quaternary structure, this bacteriocin depends upon the complementation of two peptides for activity: LafA and LafX. Associated with a 180 kDa bacteriocin complex.

In terms of biological role, heat stable bacteriocin active against Enterococcus faecalis and other Lactobacilli. The protein is Bacteriocin lactacin-F subunit LafX (lafX) of Lactobacillus johnsonii (strain CNCM I-12250 / La1 / NCC 533).